Consider the following 723-residue polypeptide: Malonamoyl-CoA synthetase vrtB (723 aa).

This sequence belongs to the ATP-dependent AMP-binding enzyme family.

The protein operates within secondary metabolite biosynthesis; terpenoid biosynthesis. Its function is as follows. Malonamoyl-CoA synthetase; part of the gene cluster that mediates the biosynthesis of viridicatumtoxin, a tetracycline-like fungal meroterpenoid with a unique, fused spirobicyclic ring system. The first step of the pathway is the production of the malonamoyl-CoA starter unit for the polyketide synthase vrtA. The aldolase vrtJ may be involved in the synthesis of the malonamate substrate for malonamoyl-CoA synthetase vrtB. The polyketide synthase vrtA then may utilize the malonamoyl-CoA starter unit, followed by sequential condensation of eight malonyl-CoA units to form the polyketide backbone. The cyclization of the last ring could be mediated by the lactamase-like protein vrtG. The proposed post-PKS tailoring steps are a hydroxylation at C5 catalyzed the cytochrome P450 monooxygenase vrtE, a hydroxylation at C12a catalyzed by VrtH and/or VrtI, and an O-methylation by the O-methyltransferase vrtF. VrtC is then proposed to catalyze the transfer of a geranyl group synthesized by vrtD to the aromatic C ring of the tetracyclic polyketide intermediate of viridicatumtoxin to yield previridicatumtoxin. Finally, the cytochrome P450 monooxygenase vrtK catalyzes the spirocyclization of the geranyl moiety of previridicatumtoxin to afford viridicatumtoxin. The chain is Malonamoyl-CoA synthetase vrtB from Penicillium aethiopicum.